The chain runs to 384 residues: Deoxyguanosinetriphosphate triphosphohydrolase-like protein (384 aa).

The region spanning 62-198 is the HD domain; the sequence is RLTHSLEVST…AALADDISYI (137 aa).

It belongs to the dGTPase family. Type 2 subfamily.

This chain is Deoxyguanosinetriphosphate triphosphohydrolase-like protein, found in Rickettsia conorii (strain ATCC VR-613 / Malish 7).